We begin with the raw amino-acid sequence, 204 residues long: Large ribosomal subunit protein eL15 (204 aa).

The interval 155–204 (VHKHREQRGLTSAGRKSRGLGKGWRFSATRGGSQAKNWKRKNTKVFHRKR) is disordered. Residues 191 to 204 (NWKRKNTKVFHRKR) are compositionally biased toward basic residues.

This sequence belongs to the eukaryotic ribosomal protein eL15 family.

The polypeptide is Large ribosomal subunit protein eL15 (rpl-15) (Caenorhabditis elegans).